The primary structure comprises 436 residues: GTPase Der (436 aa).

EngA-type G domains lie at 4–167 and 175–351; these read PTVA…PTEV and IRFS…ESQN. GTP is bound by residues 10–17, 57–61, 119–122, 181–188, 229–233, and 294–297; these read GRPNVGKS, DTGGI, NKVD, DTAGM, and NKWD. The region spanning 352–436 is the KH-like domain; sequence RRISSAVLND…PIHLIARKRK (85 aa).

The protein belongs to the TRAFAC class TrmE-Era-EngA-EngB-Septin-like GTPase superfamily. EngA (Der) GTPase family. In terms of assembly, associates with the 50S ribosomal subunit.

Functionally, GTPase that plays an essential role in the late steps of ribosome biogenesis. The chain is GTPase Der from Streptococcus thermophilus (strain ATCC BAA-491 / LMD-9).